The chain runs to 342 residues: Signaling lymphocytic activation molecule (342 aa).

An N-terminal signal peptide occupies residues 1–26 (MDSRGFLSLRCLLVLALASKLSCGTG). The Extracellular portion of the chain corresponds to 27–237 (ESLMNCPEVP…CRPESSVPRQ (211 aa)). The region spanning 29 to 138 (LMNCPEVPGK…QHFCLQLKLY (110 aa)) is the Ig-like V-type domain. Residues N57, N102, N125, N150, N157, N189, and N217 are each glycosylated (N-linked (GlcNAc...) asparagine). An Ig-like C2-type domain is found at 144–223 (PEIKVLNWTQ…PVSNRSWSFN (80 aa)). 2 disulfide bridges follow: C158–C228 and C164–C209. A helical membrane pass occupies residues 238 to 261 (WRLYAGLFLGGIVGVILIFEVVLL). Residues 262–342 (LLRRRGKTNH…VYASVTFPES (81 aa)) lie on the Cytoplasmic side of the membrane. Positions 282-287 (TIYAQV) match the ITSM 1 motif. Residues Y284, Y310, and Y334 each carry the phosphotyrosine; by FYN modification. The short motif at 310–315 (YVAATE) is the SH2-binding element. An ITSM 2 motif is present at residues 332-337 (TVYASV).

As to quaternary structure, interacts (via cytoplasmic domain) with SH2D1A and SH2D1B; SH2D1A mediates association with FYN. Interacts (via cytoplasmic domain phosphorylated on tyrosine residues) with INPP5D and PTPN11; presence of SH2D1A facilitates binding to INPP5D. Interacts with MAP4K1. Interacts with PIK3C3, BECN1 and UVRAG; indicative for an association with PI3K complex II (PI3KC3-C2). Interacts with canine distemper virus HN protein; suggesting that it may serve as a receptor. In terms of processing, phosphorylated on tyrosine residues by FYN.

It localises to the cell membrane. Self-ligand receptor of the signaling lymphocytic activation molecule (SLAM) family. SLAM receptors triggered by homo- or heterotypic cell-cell interactions are modulating the activation and differentiation of a wide variety of immune cells and thus are involved in the regulation and interconnection of both innate and adaptive immune response. Activities are controlled by presence or absence of small cytoplasmic adapter proteins, SH2D1A/SAP and/or SH2D1B/EAT-2. SLAMF1-induced signal-transduction events in T-lymphocytes are different from those in B-cells. Two modes of SLAMF1 signaling seem to exist: one depending on SH2D1A (and perhaps SH2D1B) and another in which protein-tyrosine phosphatase 2C (PTPN11)-dependent signal transduction operates. Initially it has been proposed that association with SH2D1A prevents binding to inhibitory effectors including INPP5D/SHIP1 and PTPN11/SHP-2. However, signaling is also regulated by SH2D1A which can simultaneously interact with and recruit FYN which subsequently phosphorylates and activates SLAMF1. Mediates IL-2-independent proliferation of activated T cells during immune responses and induces IFN-gamma production. Downstreaming signaling involves INPP5D/SHIP1, DOK1 and DOK2 leading to inhibited IFN-gamma production in T-cells, and PRKCQ, BCL10 and NFKB1 leading to increased T-cell activation and Th2 cytokine production. Promotes T-cell receptor-induced IL-4 secretion by CD4(+) cells. Inhibits antigen receptor-mediated production of IFN-gamma, but not IL-2, in CD4(-)/CD8(-) T-cells. Required for IL-4 production by germinal centers T follicular helper (T(Fh))cells. May inhibit CD40-induced signal transduction in monocyte-derived dendritic cells. May play a role in allergic responses and may regulate allergen-induced Th2 cytokine and Th1 cytokine secretion. In conjunction with SLAMF6 controls the transition between positive selection and the subsequent expansion and differentiation of the thymocytic natural killer T (NKT) cell lineage. Involved in the peripheral differentiation of indifferent natural killer T (iNKT) cells toward a regulatory NKT2 type. In macrophages involved in down-regulation of IL-12, TNF-alpha and nitric oxide in response to lipopolysaccharide (LPS). In B-cells activates the ERK signaling pathway independently of SH2D1A but implicating both, SYK and INPP5D, and activates Akt signaling dependent on SYK and SH2D1A. In conjunction with SLAMF5 and SLAMF6 may be a negative regulator of the humoral immune response. The chain is Signaling lymphocytic activation molecule (SLAMF1) from Canis lupus familiaris (Dog).